Consider the following 520-residue polypeptide: Sodium-dependent dicarboxylate transporter SdcS (520 aa).

14 consecutive transmembrane segments (helical) span residues 30–50 (AGQL…LLFF), 55–75 (LPWK…WWIT), 77–97 (AIPI…GHIL), 104–124 (SEYG…AIAM), 160–180 (SMFV…LAII), 207–227 (IGYA…PLII), 242–262 (FAKW…ITWL), 298–318 (KVVQ…EFLL), 323–343 (VTSS…LFVI), 362–382 (ELPW…KGIS), 399–419 (GVSP…LTEV), 428–448 (MILP…LLLM), 452–472 (AMAA…AIIF), and 491–511 (LISA…VLGI).

Belongs to the SLC13A/DASS transporter (TC 2.A.47) family. NADC subfamily.

It is found in the cell membrane. Its function is as follows. Mediates the transport of the dicarboxylates fumarate, malate, and succinate across the cytoplasmic membrane via a Na(+)-electrochemical gradient. The polypeptide is Sodium-dependent dicarboxylate transporter SdcS (sdcS) (Staphylococcus aureus (strain MSSA476)).